Here is a 1342-residue protein sequence, read N- to C-terminus: MVYSYTEKKRIRKDFGKRPQVLDIPYLLSIQLDSFQKFIEQDPEGQHGLEAAFRSVFPIQSYSGNSELQYVSYRLGEPVFDVKECQIRGVTFSAPLRVKLRLVIYEREAPEGTVKDIKEQEVYMGEIPLMTENGTFVINGTERVIVSQLHRSPGVFFDSDKGKTHSSGKVLYNARIIPYRGSWLDFEFDPKDNLFVRIDRRRKLPATIILRALNYTTEQILDLFFAKVVYEIRDNKLQMELVPERLRGETASFDIEANGKIYIEKGRRITARHIRQLEKDEIQSIEVPVEYIAGKVVAKDYIDTNTGELICAANMELSLDLLAKLSQSGHKRIETLFTNDLDHGAYISETVRVDPTSDRLSALVEIYRMMRPGEPPTREAAENLFENLFFSEDRYDLSAVGRMKFNRSLLRDEIEGSGILSKDDIIEVMKKLIGIRNGKGEVDDIDHLGNRRIRSVGEMAENQFRVGLVRVERAVKERLSLGDLDTLMPQDMINAKPISAAVKEFFGSSQLSQFMDQNNPLSEITHKRRISALGPGGLTRERAGFEVRDVHPTHYGRVCPIETPEGPNIGLINSLSVYAQTNEYGFLETPYRRVRDGLVTDEINYLSAIEEGNFVIAQANSNLDDDGRFVEDLVTCRSKGESSLFSRDQVDYMDVSTQQVVSVGASLIPFLEHDDANRALMGANMQRQAVPTLRADKPLVGTGMERAVAVDSGVTAVARRGGVIQYVDASRIVIKVNEDEMLAGEAGIDIYNLTKYTRSNQNTCINQMPCVNLGEPIERGDVLADGPSTDLGELALGQNMRVAFMPWNGYNFEDSILVSERVVQEDRFTTIHIQELACVSRDTKLGPEEITADIPNVGEAALSKLDESGIVYIGAEVTGGDILVGKVTPKGETQLTPEEKLLRAIFGEKASDVKDSSLRVPNGVSGTIIDVQVFTRDGVEKDKRALEIEEMQLKQAKKDLTEELQILEAGLFARIHAVLVAGGVEAEKLSKLPRDRWLELGLTDEEKQNQLEQLAEQYDELKSDFEKKLDAKRRKITQGDDLAPGVLKIVKVYLAVKRQIQPGDKMAGRHGNKGVISKINPIEDMPYDENGTPVDIVLNPLGVPSRMNIGQILETHLGMAAKGIGEKINQMLKQHQEVAKLREFIQKAYDLGDDVCQKVDLNTFTDDEVLRLAENLKKGMPIATPVFDGAKESEIKQLLEMGGIPTSGQITLFDGRTGEQFERQVTVGYMYMLKLNHLVDDKMHARSTGSYSLVTQQPLGGKAQFGGQRFGEMEVWALEAYGAAYTLQEMLTVKSDDVNGRTKMYKNIVDGDHRMEPGMPESFNVLLKEIRSLGINIELEGE.

Belongs to the RNA polymerase beta chain family. In terms of assembly, the RNAP catalytic core consists of 2 alpha, 1 beta, 1 beta' and 1 omega subunit. When a sigma factor is associated with the core the holoenzyme is formed, which can initiate transcription.

The enzyme catalyses RNA(n) + a ribonucleoside 5'-triphosphate = RNA(n+1) + diphosphate. Functionally, DNA-dependent RNA polymerase catalyzes the transcription of DNA into RNA using the four ribonucleoside triphosphates as substrates. The protein is DNA-directed RNA polymerase subunit beta of Serratia proteamaculans (strain 568).